The primary structure comprises 73 residues: Putative defensin-like protein 277 (73 aa).

The first 24 residues, 1–24 (MSAQKIYLASLLLFICLVFPQSTA), serve as a signal peptide directing secretion. 4 disulfides stabilise this stretch: Cys27–Cys64, Cys33–Cys52, Cys39–Cys62, and Cys43–Cys63.

The protein belongs to the DEFL family.

The protein localises to the secreted. This Arabidopsis thaliana (Mouse-ear cress) protein is Putative defensin-like protein 277.